We begin with the raw amino-acid sequence, 197 residues long: UPF0314 protein NGR_c32320 (197 aa).

3 helical membrane-spanning segments follow: residues 16 to 36 (WIWL…QHLM), 66 to 86 (WYTP…YLLL), and 152 to 172 (LPVA…GWII).

It belongs to the UPF0314 family.

The protein localises to the cell membrane. This Sinorhizobium fredii (strain NBRC 101917 / NGR234) protein is UPF0314 protein NGR_c32320.